A 382-amino-acid polypeptide reads, in one-letter code: Kelch domain-containing protein 3 (382 aa).

5 Kelch repeats span residues 25 to 77 (RVYS…PYMR), 88 to 138 (TVLL…VLGK), 139 to 189 (IMYI…TMLG), 191 to 249 (HMYV…GYNG), and 251 to 301 (LYIF…IVGD).

Component of a CRL2(KLHDC3) complex, also named ECS(KLHDC3) complex, composed of CUL2, Elongin BC (ELOB and ELOC), RBX1 and substrate-specific adapter KLHDC3. May form oligomers as a KLHDC3-ELOB-ELOC complex; this interaction is likely autoinhibitory for the E3 ligase complex.

Its subcellular location is the cytoplasm. It functions in the pathway protein modification; protein ubiquitination. Functionally, substrate-recognition component of a Cul2-RING (CRL2) E3 ubiquitin-protein ligase complex of the DesCEND (destruction via C-end degrons) pathway, which recognizes a C-degron located at the extreme C terminus of target proteins, leading to their ubiquitination and degradation. The C-degron recognized by the DesCEND pathway is usually a motif of less than ten residues and can be present in full-length proteins, truncated proteins or proteolytically cleaved forms. The CRL2(KLHDC3) complex specifically recognizes proteins with a glycine (Gly) at the C-terminus, leading to their ubiquitination and degradation: recognizes the C-terminal -Arg-(Xaa)n-Arg-Gly, -Arg-(Xaa)n-Lys-Gly, and -Arg-(Xaa)n-Gln-Gly degrons. The CRL2(KLHDC3) complex mediates ubiquitination and degradation of truncated SELENOV and SEPHS2 selenoproteins produced by failed UGA/Sec decoding, which end with a glycine. May be involved in meiotic recombination process. The protein is Kelch domain-containing protein 3 of Homo sapiens (Human).